The primary structure comprises 602 residues: Elongation factor 4 (602 aa).

Residues 7–189 (ARLRNFCIIA…SVVDRIPPPK (183 aa)) enclose the tr-type G domain. Residues 19–24 (DHGKST) and 136–139 (NKVD) contribute to the GTP site.

Belongs to the TRAFAC class translation factor GTPase superfamily. Classic translation factor GTPase family. LepA subfamily.

Its subcellular location is the cell inner membrane. The catalysed reaction is GTP + H2O = GDP + phosphate + H(+). Functionally, required for accurate and efficient protein synthesis under certain stress conditions. May act as a fidelity factor of the translation reaction, by catalyzing a one-codon backward translocation of tRNAs on improperly translocated ribosomes. Back-translocation proceeds from a post-translocation (POST) complex to a pre-translocation (PRE) complex, thus giving elongation factor G a second chance to translocate the tRNAs correctly. Binds to ribosomes in a GTP-dependent manner. This chain is Elongation factor 4, found in Prochlorococcus marinus (strain SARG / CCMP1375 / SS120).